Here is a 349-residue protein sequence, read N- to C-terminus: tRNA pseudouridine synthase D (349 aa).

Substrate is bound at residue F26. The active-site Nucleophile is D79. A substrate-binding site is contributed by N128. In terms of domain architecture, TRUD spans 154 to 302; that stretch reads GVPNYFGSQR…VEGSRRAVLL (149 aa). F328 contributes to the substrate binding site.

This sequence belongs to the pseudouridine synthase TruD family.

It catalyses the reaction uridine(13) in tRNA = pseudouridine(13) in tRNA. Responsible for synthesis of pseudouridine from uracil-13 in transfer RNAs. This is tRNA pseudouridine synthase D from Yersinia pseudotuberculosis serotype O:1b (strain IP 31758).